Consider the following 138-residue polypeptide: Hydrogenase maturation factor HypA (138 aa).

Ni(2+) is bound at residue His2. Zn(2+) contacts are provided by Cys73, Cys76, Cys110, and Cys113.

This sequence belongs to the HypA/HybF family.

Its function is as follows. Involved in the maturation of [NiFe] hydrogenases. Required for nickel insertion into the metal center of the hydrogenase. In Thermococcus sibiricus (strain DSM 12597 / MM 739), this protein is Hydrogenase maturation factor HypA.